The primary structure comprises 628 residues: Cystathionine gamma-synthase-like enzyme iboG2 (628 aa).

Y313 provides a ligand contact to substrate. K417 bears the N6-(pyridoxal phosphate)lysine mark.

This sequence belongs to the trans-sulfuration enzymes family. The cofactor is pyridoxal 5'-phosphate.

Its pathway is secondary metabolite biosynthesis. Cystathionine gamma-synthase-like enzyme; part of the gene cluster that mediates the biosynthesis of the psychoactive metabolites ibotenic acid and muscimol. The first committed step is glutamate hydroxylation by the 2-oxoglutarate-dependent dioxygenase iboH, and the last step is decarboxylation of ibotenic acid to muscimol by the decarboxylase iboD. The order of the intermediate reactions is somewhat ambiguous. IboA likely activates the carboxylic acid at position 5 to introduce an amide bond, and the flavin monooxygenase iboF generates the N-O bond. There are several options for the latter step. One option is that iboF directly hydroxylates the amide nitrogen formed by iboA to produce a hydroxamic acid species. Another option is that iboF hydroxylates an external N-containing compound, whose resulting N-O bond is subsequently introduced into the hydroxyglutamate scaffold. The paralogous PLP-dependent cystathionine gamma-synthase-like enzymes iboG1 and iboG2 are likely involved in substitution of the OH group at position 3 by the O-N moiety. The first cyclic intermediate is most probably tricholomic acid which is likely desaturated to ibotenic acid by the cytochrome P450 monooxygenase iboC. In Amanita muscaria (strain Koide BX008), this protein is Cystathionine gamma-synthase-like enzyme iboG2.